The following is a 152-amino-acid chain: Large ribosomal subunit protein bL9 (152 aa).

The protein belongs to the bacterial ribosomal protein bL9 family.

Its function is as follows. Binds to the 23S rRNA. This Trichormus variabilis (strain ATCC 29413 / PCC 7937) (Anabaena variabilis) protein is Large ribosomal subunit protein bL9.